The sequence spans 70 residues: U2-agatoxin-Ao1b (70 aa).

Residues 1–20 form the signal peptide; sequence MRAIISLILISAMVFSMIAA. Residues 21–34 constitute a propeptide that is removed on maturation; the sequence is VPEEEGLQLSEDER. 3 cysteine pairs are disulfide-bonded: Cys37/Cys53, Cys44/Cys58, and Cys52/Cys68. Leu69 is modified (leucine amide).

It belongs to the neurotoxin 01 (U2-agtx) family. As to expression, expressed by the venom gland.

It is found in the secreted. In terms of biological role, insect active toxin causing rapid but reversible paralysis in crickets. No activity shown in mammals. Does not show effect on mammalian voltage-gated calcium channels. The protein is U2-agatoxin-Ao1b of Agelena orientalis (Funnel-web spider).